A 2055-amino-acid chain; its full sequence is Citron Rho-interacting kinase (2055 aa).

M1 carries the N-acetylmethionine modification. Residues 97–359 (FEVRSLVGCG…FEGLCCHPFF (263 aa)) enclose the Protein kinase domain. ATP is bound by residues 103 to 111 (VGCGHFAEV) and K126. D221 (proton acceptor) is an active-site residue. In terms of domain architecture, AGC-kinase C-terminal spans 360 to 430 (ARTDWNNIRN…SKALGYLGRS (71 aa)). Phosphoserine is present on residues S432, S439, S479, and S581. Coiled-coil stretches lie at residues 441–1086 (AKVS…QWEA), 1091–1247 (LGDE…VLYS), and 1275–1325 (AKKK…RKAT). The interval 1132-1328 (LAVKEHKAEI…AAHRKATDHP (197 aa)) is interaction with Rho/Rac. At Y1237 the chain carries Phosphotyrosine. The span at 1316–1329 (REEAAHRKATDHPH) shows a compositional bias: basic and acidic residues. 2 disordered regions span residues 1316 to 1336 (REEA…PATA) and 1348 to 1377 (SPEH…EFSR). Residues 1353 to 1363 (PSAMSLLAPPS) show a composition bias toward low complexity. The span at 1365–1377 (RRKESSTPEEFSR) shows a compositional bias: basic and acidic residues. A Phorbol-ester/DAG-type zinc finger spans residues 1388 to 1437 (PHRFNVGLNMRATKCAVCLDTVHFGRQASKCLECQVMCHPKCSTCLPATC). The region spanning 1469–1589 (SLHLEGWMKV…WVTALESVVA (121 aa)) is the PH domain. The CNH domain maps to 1617–1907 (RLDMNCTLPF…RYLGPAISSG (291 aa)). N6-acetyllysine is present on K1747. Residues 1932–2040 (SGTEQHRVPS…RGRLPAGAVR (109 aa)) form a disordered region. A compositionally biased stretch (polar residues) spans 1939 to 1948 (VPSTSRSSPN). S1966 is subject to Phosphoserine. Over residues 1974 to 2031 (SHPREPSTPHRYRDREGRTELRRDKSPGRPLEREKSPGRMLSTRRERSPGRLFEDSSR) the composition is skewed to basic and acidic residues. The SH3-binding signature appears at 1979-1984 (PSTPHR). At S2021 the chain carries Phosphoserine. The residue at position 2041 (T2041) is a Phosphothreonine.

This sequence belongs to the protein kinase superfamily. AGC Ser/Thr protein kinase family. As to quaternary structure, interacts with TTC3. Homodimer. Directly interacts with KIF14 depending on the activation state (stronger interaction with the kinase-dead form). As to expression, a major signal was observed in testis and brain, but it was also detected in thymus, spleen, kidney, heart and lung.

It is found in the cytoplasm. It carries out the reaction L-seryl-[protein] + ATP = O-phospho-L-seryl-[protein] + ADP + H(+). The enzyme catalyses L-threonyl-[protein] + ATP = O-phospho-L-threonyl-[protein] + ADP + H(+). In terms of biological role, plays a role in cytokinesis. Required for KIF14 localization to the central spindle and midbody. Probable RHO/RAC effector that binds to the GTP-bound forms of RHO and RAC1. It probably binds p21 with a tighter specificity in vivo. Displays serine/threonine protein kinase activity. Plays an important role in the regulation of cytokinesis and the development of the central nervous system. Phosphorylates MYL9/MLC2. This is Citron Rho-interacting kinase (Cit) from Mus musculus (Mouse).